We begin with the raw amino-acid sequence, 299 residues long: Probable lipid kinase YegS-like (299 aa).

The region spanning 2-133 is the DAGKc domain; that stretch reads SRSAGSFLIL…IDIAHVNDKT (132 aa). ATP-binding positions include Thr-40, 66 to 72, and Thr-95; that span reads GDGTINE. 3 residues coordinate Mg(2+): Leu-215, Asp-218, and Leu-220. The active-site Proton acceptor is the Glu-271.

Belongs to the diacylglycerol/lipid kinase family. YegS lipid kinase subfamily. The cofactor is Mg(2+). Requires Ca(2+) as cofactor.

It localises to the cytoplasm. In terms of biological role, probably phosphorylates lipids; the in vivo substrate is unknown. This chain is Probable lipid kinase YegS-like, found in Cronobacter sakazakii (strain ATCC BAA-894) (Enterobacter sakazakii).